A 365-amino-acid polypeptide reads, in one-letter code: tRNA/tmRNA (uracil-C(5))-methyltransferase (365 aa).

Positions 189, 217, 222, 238, and 298 each coordinate S-adenosyl-L-methionine. The active-site Nucleophile is the cysteine 323. Glutamate 357 (proton acceptor) is an active-site residue.

Belongs to the class I-like SAM-binding methyltransferase superfamily. RNA M5U methyltransferase family. TrmA subfamily.

It catalyses the reaction uridine(54) in tRNA + S-adenosyl-L-methionine = 5-methyluridine(54) in tRNA + S-adenosyl-L-homocysteine + H(+). It carries out the reaction uridine(341) in tmRNA + S-adenosyl-L-methionine = 5-methyluridine(341) in tmRNA + S-adenosyl-L-homocysteine + H(+). Dual-specificity methyltransferase that catalyzes the formation of 5-methyluridine at position 54 (m5U54) in all tRNAs, and that of position 341 (m5U341) in tmRNA (transfer-mRNA). In Pseudoalteromonas atlantica (strain T6c / ATCC BAA-1087), this protein is tRNA/tmRNA (uracil-C(5))-methyltransferase.